We begin with the raw amino-acid sequence, 162 residues long: NADH-quinone oxidoreductase subunit I (162 aa).

4Fe-4S ferredoxin-type domains follow at residues 52 to 82 and 93 to 122; these read LRRY…IEAG and VRYD…EGPN. Residues Cys62, Cys65, Cys68, Cys72, Cys102, Cys105, Cys108, and Cys112 each coordinate [4Fe-4S] cluster.

It belongs to the complex I 23 kDa subunit family. NDH-1 is composed of 14 different subunits. Subunits NuoA, H, J, K, L, M, N constitute the membrane sector of the complex. Requires [4Fe-4S] cluster as cofactor.

It is found in the cell inner membrane. It carries out the reaction a quinone + NADH + 5 H(+)(in) = a quinol + NAD(+) + 4 H(+)(out). NDH-1 shuttles electrons from NADH, via FMN and iron-sulfur (Fe-S) centers, to quinones in the respiratory chain. The immediate electron acceptor for the enzyme in this species is believed to be ubiquinone. Couples the redox reaction to proton translocation (for every two electrons transferred, four hydrogen ions are translocated across the cytoplasmic membrane), and thus conserves the redox energy in a proton gradient. The chain is NADH-quinone oxidoreductase subunit I from Nitrobacter winogradskyi (strain ATCC 25391 / DSM 10237 / CIP 104748 / NCIMB 11846 / Nb-255).